Consider the following 332-residue polypeptide: D-amino acid oxidase (332 aa).

10 residues coordinate FAD: A8, G9, I10, T39, T40, A45, G46, L47, V161, and S180. The D-proline site is built by Y218 and R274. Positions 218 and 274 each coordinate D-serine. Residues R274, G305, G306, G308, and T310 each contribute to the FAD site. G306 contributes to the D-proline binding site. G306 serves as a coordination point for D-serine. Positions 330–332 (AKL) match the Microbody targeting signal motif.

It belongs to the DAMOX/DASOX family. The cofactor is FAD.

It localises to the peroxisome matrix. It catalyses the reaction a D-alpha-amino acid + O2 + H2O = a 2-oxocarboxylate + H2O2 + NH4(+). The catalysed reaction is D-alanine + O2 + H2O = pyruvate + H2O2 + NH4(+). The enzyme catalyses D-arginine + O2 + H2O = 5-guanidino-2-oxopentanoate + H2O2 + NH4(+). It carries out the reaction D-asparagine + O2 + H2O = 2-oxosuccinamate + H2O2 + NH4(+). It catalyses the reaction D-cysteine + O2 + H2O = 2-oxo-3-sulfanylpropanoate + H2O2 + NH4(+). The catalysed reaction is D-glutamine + O2 + H2O = 2-oxoglutaramate + H2O2 + NH4(+). The enzyme catalyses D-isoleucine + O2 + H2O = (R)-3-methyl-2-oxopentanoate + H2O2 + NH4(+). It carries out the reaction D-leucine + O2 + H2O = 4-methyl-2-oxopentanoate + H2O2 + NH4(+). It catalyses the reaction D-lysine + O2 + H2O = 6-amino-2-oxohexanoate + H2O2 + NH4(+). The catalysed reaction is D-methionine + O2 + H2O = 4-methylsulfanyl-2-oxobutanoate + H2O2 + NH4(+). The enzyme catalyses D-phenylalanine + O2 + H2O = 3-phenylpyruvate + H2O2 + NH4(+). It carries out the reaction D-proline + O2 = 1-pyrroline-2-carboxylate + H2O2. It catalyses the reaction D-valine + O2 + H2O = 3-methyl-2-oxobutanoate + H2O2 + NH4(+). The catalysed reaction is D-histidine + O2 + H2O = 3-(imidazol-5-yl)pyruvate + H2O2 + NH4(+). The enzyme catalyses D-tyrosine + O2 + H2O = 3-(4-hydroxyphenyl)pyruvate + H2O2 + NH4(+). It carries out the reaction D-serine + O2 + H2O = 3-hydroxypyruvate + H2O2 + NH4(+). It catalyses the reaction D-threonine + O2 + H2O = (S)-3-hydroxy-2-oxobutanoate + H2O2 + NH4(+). The catalysed reaction is D-tryptophan + O2 + H2O = indole-3-pyruvate + H2O2 + NH4(+). In terms of biological role, catalyzes the oxidative deamination of D-amino acids with broad substrate specificity. Could be responsible for the degradation of diet-derived D-alanine in the intestine. Maintains the asexual state of worms and represses early ovarian development. Following sexual induction, the enzyme is required for differentiation of oogonia into oocytes in the developing ovaries. This is D-amino acid oxidase from Dugesia ryukyuensis (Freshwater planarian flatworm).